A 727-amino-acid polypeptide reads, in one-letter code: Prolyl endopeptidase-like (727 aa).

Methionine 1 bears the N-acetylmethionine mark. Catalysis depends on charge relay system residues serine 559, aspartate 645, and histidine 690.

It belongs to the peptidase S9A family. As to quaternary structure, homodimer. Interacts with the AP-1 complex. Expressed in pyramidal neurons of the temporal cortex and neocortex (at protein level). Widely expressed. Expressed at higher level in brain, skeletal muscle, heart and kidney. Expressed at the endplates in the neuromuscular junction.

It is found in the cytoplasm. The protein resides in the cytosol. Its subcellular location is the golgi apparatus. The protein localises to the trans-Golgi network. It localises to the cytoskeleton. It is found in the nucleus. With respect to regulation, inhibited by PMSF and Prefabloc, as well as leupeptin at high concentrations. Partially inhibited by TPCK, a chymotrypsin inhibitor and E64, a cysteine protease inhibitor. Not affected by 4-amidinophenyl-methanesulfonyl fluoride (APMSF), pepstatin or EDTA. Inhibited by 1-isobutyl-3-oxo-3,5,6,7-tetrahydro-2H-cyclopenta[c]pyridine-4-carbonitrile. Functionally, serine peptidase whose precise substrate specificity remains unclear. Does not cleave peptides after a arginine or lysine residue. Regulates trans-Golgi network morphology and sorting by regulating the membrane binding of the AP-1 complex. May play a role in the regulation of synaptic vesicle exocytosis. The sequence is that of Prolyl endopeptidase-like (PREPL) from Homo sapiens (Human).